Consider the following 512-residue polypeptide: ATP synthase subunit alpha 1 (512 aa).

An ATP-binding site is contributed by 169 to 176 (GDRQTGKT).

It belongs to the ATPase alpha/beta chains family. As to quaternary structure, F-type ATPases have 2 components, CF(1) - the catalytic core - and CF(0) - the membrane proton channel. CF(1) has five subunits: alpha(3), beta(3), gamma(1), delta(1), epsilon(1). CF(0) has four main subunits: a(1), b(1), b'(1) and c(9-12).

Its subcellular location is the cell inner membrane. It carries out the reaction ATP + H2O + 4 H(+)(in) = ADP + phosphate + 5 H(+)(out). Produces ATP from ADP in the presence of a proton gradient across the membrane. The alpha chain is a regulatory subunit. This chain is ATP synthase subunit alpha 1, found in Cereibacter sphaeroides (strain ATCC 17029 / ATH 2.4.9) (Rhodobacter sphaeroides).